A 346-amino-acid chain; its full sequence is Heterogeneous nuclear ribonucleoprotein A2 homolog 1 (346 aa).

2 consecutive RRM domains span residues R9 to K92 and K100 to Q179. 2 disordered regions span residues Q182–G217 and N326–Y346. Residues G193 to G217 are compositionally biased toward gly residues. The tract at residues Q297 to Y340 is nuclear targeting sequence.

Its subcellular location is the nucleus. Functionally, forms complexes (ribonucleosomes) with at least 20 other different hnRNP and heterogeneous nuclear RNA in the nucleus. The chain is Heterogeneous nuclear ribonucleoprotein A2 homolog 1 from Xenopus laevis (African clawed frog).